Consider the following 491-residue polypeptide: Glutamyl-tRNA(Gln) amidotransferase subunit A (491 aa).

Catalysis depends on charge relay system residues K76 and S154. The active-site Acyl-ester intermediate is the S178.

This sequence belongs to the amidase family. GatA subfamily. As to quaternary structure, heterotrimer of A, B and C subunits.

It catalyses the reaction L-glutamyl-tRNA(Gln) + L-glutamine + ATP + H2O = L-glutaminyl-tRNA(Gln) + L-glutamate + ADP + phosphate + H(+). Functionally, allows the formation of correctly charged Gln-tRNA(Gln) through the transamidation of misacylated Glu-tRNA(Gln) in organisms which lack glutaminyl-tRNA synthetase. The reaction takes place in the presence of glutamine and ATP through an activated gamma-phospho-Glu-tRNA(Gln). The sequence is that of Glutamyl-tRNA(Gln) amidotransferase subunit A from Cereibacter sphaeroides (strain ATCC 17023 / DSM 158 / JCM 6121 / CCUG 31486 / LMG 2827 / NBRC 12203 / NCIMB 8253 / ATH 2.4.1.) (Rhodobacter sphaeroides).